A 296-amino-acid polypeptide reads, in one-letter code: Complex I intermediate-associated protein 30, mitochondrial (296 aa).

A mitochondrion-targeting transit peptide spans 1–29 (MNSLLRQGLRLGCCLPAVQQQIHTTAVHR).

This sequence belongs to the CIA30 family. In terms of assembly, associates with mitochondrial complex I assembly intermediates during its biogenesis.

The protein localises to the mitochondrion. Chaperone protein involved in the assembly of the mitochondrial NADH:ubiquinone oxidoreductase complex (complex I). The sequence is that of Complex I intermediate-associated protein 30, mitochondrial from Drosophila melanogaster (Fruit fly).